Reading from the N-terminus, the 56-residue chain is Zinc finger mu-protein HVO_0758 (56 aa).

4 residues coordinate Zn(2+): cysteine 23, cysteine 26, cysteine 45, and cysteine 48. 2 short sequence motifs (c(P)XCG motif) span residues 23 to 27 (CSECG) and 45 to 49 (CADCG).

As to quaternary structure, monomer.

Functionally, zinc-binding protein that binds one zinc ion. Is involved in biofilm formation, swarming and glycerol metabolism regulation. This chain is Zinc finger mu-protein HVO_0758, found in Haloferax volcanii (strain ATCC 29605 / DSM 3757 / JCM 8879 / NBRC 14742 / NCIMB 2012 / VKM B-1768 / DS2) (Halobacterium volcanii).